A 285-amino-acid chain; its full sequence is 2-dehydro-3-deoxyphosphooctonate aldolase (285 aa).

It belongs to the KdsA family.

It is found in the cytoplasm. It carries out the reaction D-arabinose 5-phosphate + phosphoenolpyruvate + H2O = 3-deoxy-alpha-D-manno-2-octulosonate-8-phosphate + phosphate. It participates in carbohydrate biosynthesis; 3-deoxy-D-manno-octulosonate biosynthesis; 3-deoxy-D-manno-octulosonate from D-ribulose 5-phosphate: step 2/3. The protein operates within bacterial outer membrane biogenesis; lipopolysaccharide biosynthesis. The chain is 2-dehydro-3-deoxyphosphooctonate aldolase from Polaromonas sp. (strain JS666 / ATCC BAA-500).